Consider the following 252-residue polypeptide: MLTVQSIPAFNDNYIWLIHNSHNHCVVVDPGDATPVLKVLEEQSLTLDAILITHHHHDHIGGISELKRHYPNLNVVGPASEPIPGISQSVEDGDQVELFGERFMVLGVPGHTLGHVAYVGDGKLFCGDTLFSVGCGRLFEGTPAQMFQSLKKLAALPDETEIYCAHEYTSSNLAFALVAEQDNPHLQRYREDVSRMRAQGISTIPSTLRQEKLVNPFLRCEQPSIKKSVADKAFDDSDLETFAALRRWKDNF.

Zn(2+) is bound by residues His54, His56, Asp58, His59, His111, Asp128, and His166.

This sequence belongs to the metallo-beta-lactamase superfamily. Glyoxalase II family. As to quaternary structure, monomer. It depends on Zn(2+) as a cofactor.

It catalyses the reaction an S-(2-hydroxyacyl)glutathione + H2O = a 2-hydroxy carboxylate + glutathione + H(+). The protein operates within secondary metabolite metabolism; methylglyoxal degradation; (R)-lactate from methylglyoxal: step 2/2. In terms of biological role, thiolesterase that catalyzes the hydrolysis of S-D-lactoyl-glutathione to form glutathione and D-lactic acid. This chain is Hydroxyacylglutathione hydrolase, found in Photobacterium profundum (strain SS9).